The sequence spans 316 residues: Tetrahydromethanopterin S-methyltransferase subunit H (316 aa).

This sequence belongs to the MtrH family. In terms of assembly, the complex is composed of 8 subunits; MtrA, MtrB, MtrC, MtrD, MtrE, MtrF, MtrG and MtrH.

The enzyme catalyses 5-methyl-5,6,7,8-tetrahydromethanopterin + coenzyme M + 2 Na(+)(in) = 5,6,7,8-tetrahydromethanopterin + methyl-coenzyme M + 2 Na(+)(out). It participates in one-carbon metabolism; methanogenesis from CO(2); methyl-coenzyme M from 5,10-methylene-5,6,7,8-tetrahydromethanopterin: step 2/2. Its function is as follows. Part of a complex that catalyzes the formation of methyl-coenzyme M and tetrahydromethanopterin from coenzyme M and methyl-tetrahydromethanopterin. This is an energy-conserving, sodium-ion translocating step. MtrH catalyzes the transfer of the methyl group from methyl-tetrahydromethanopterin to the corrinoid prosthetic group of MtrA. The sequence is that of Tetrahydromethanopterin S-methyltransferase subunit H from Methanosarcina acetivorans (strain ATCC 35395 / DSM 2834 / JCM 12185 / C2A).